A 60-amino-acid polypeptide reads, in one-letter code: Naniproin (60 aa).

4 disulfides stabilise this stretch: Cys-3-Cys-21, Cys-14-Cys-38, Cys-42-Cys-53, and Cys-54-Cys-59.

This sequence belongs to the three-finger toxin family. Short-chain subfamily. Type IA cytotoxin sub-subfamily. As to quaternary structure, monomer in solution; Homodimer and oligomer in the presence of negatively charged lipids forming a pore with a size ranging between 20 and 30 angstroms. In terms of tissue distribution, expressed by the venom gland.

Its subcellular location is the secreted. It is found in the target cell membrane. Its function is as follows. Basic protein that binds to cell membrane and depolarizes cardiomyocytes. This cytotoxin also possesses lytic activity on many other cells, including red blood cells. Interaction with sulfatides in the cell membrane induces pore formation and cell internalization and is responsible for cytotoxicity in cardiomyocytes. It targets the mitochondrial membrane and induces mitochondrial swelling and fragmentation. Inhibits protein kinases C. It binds to the integrin alpha-V/beta-3 with a moderate affinity. This Naja nigricollis (Black-necked spitting cobra) protein is Naniproin.